We begin with the raw amino-acid sequence, 313 residues long: Formate-nitrite transporter (313 aa).

Over methionine 1–alanine 46 the chain is Cytoplasmic. A helical transmembrane segment spans residues isoleucine 47 to phenylalanine 67. The Extracellular portion of the chain corresponds to tyrosine 68–glycine 77. Residues isoleucine 78–alanine 98 form a helical membrane-spanning segment. The Cytoplasmic portion of the chain corresponds to threonine 99 to arginine 127. A helical transmembrane segment spans residues valine 128–serine 148. At histidine 149–cysteine 184 the chain is on the extracellular side. The chain crosses the membrane as a helical span at residues valine 185–isoleucine 205. Over lysine 206–glycine 210 the chain is Cytoplasmic. A helical transmembrane segment spans residues methionine 211–isoleucine 231. The Extracellular segment spans residues alanine 232–asparagine 256. The chain crosses the membrane as a helical span at residues leucine 257–phenylalanine 277. Over tyrosine 278–arginine 313 the chain is Cytoplasmic. Residues threonine 290–arginine 313 are disordered. A compositionally biased stretch (polar residues) spans glycine 298–arginine 313.

The protein belongs to the FNT transporter (TC 1.A.16) family. As to quaternary structure, homopentamer.

It is found in the cell membrane. Its subcellular location is the vacuole membrane. It carries out the reaction (S)-lactate(in) + H(+)(in) = (S)-lactate(out) + H(+)(out). The enzyme catalyses formate(in) + H(+)(in) = formate(out) + H(+)(out). The catalysed reaction is pyruvate(out) + H(+)(out) = pyruvate(in) + H(+)(in). It catalyses the reaction acetate(out) + H(+)(out) = acetate(in) + H(+)(in). With respect to regulation, inhibited by the Malaria Box compound MMV007839 and its derivatives BH296 and BH267.meta. In terms of biological role, monocarboxylate-proton symporter that mediates the efflux of the waste product lactate in the intraerythrocytic parasites; active in acidic-to-neutral pH range. Transports L-lactate. The sequence is that of Formate-nitrite transporter from Plasmodium vivax.